The chain runs to 361 residues: Phospho-N-acetylmuramoyl-pentapeptide-transferase (361 aa).

Transmembrane regions (helical) follow at residues 28 to 48 (LAII…IKFL), 74 to 94 (TMGG…LADL), 99 to 119 (TWIT…DDYA), 133 to 153 (SKLL…EYLD), 168 to 188 (LSLD…VGSS), 203 to 223 (VPIA…GNLI), 236 to 256 (TGEL…FLWF), 263 to 283 (VFMG…ISVI), 288 to 308 (IVLA…ILQV), and 338 to 358 (KVVI…LSSL).

Belongs to the glycosyltransferase 4 family. MraY subfamily. Mg(2+) serves as cofactor.

Its subcellular location is the cell inner membrane. It carries out the reaction UDP-N-acetyl-alpha-D-muramoyl-L-alanyl-gamma-D-glutamyl-meso-2,6-diaminopimeloyl-D-alanyl-D-alanine + di-trans,octa-cis-undecaprenyl phosphate = di-trans,octa-cis-undecaprenyl diphospho-N-acetyl-alpha-D-muramoyl-L-alanyl-D-glutamyl-meso-2,6-diaminopimeloyl-D-alanyl-D-alanine + UMP. It participates in cell wall biogenesis; peptidoglycan biosynthesis. Its function is as follows. Catalyzes the initial step of the lipid cycle reactions in the biosynthesis of the cell wall peptidoglycan: transfers peptidoglycan precursor phospho-MurNAc-pentapeptide from UDP-MurNAc-pentapeptide onto the lipid carrier undecaprenyl phosphate, yielding undecaprenyl-pyrophosphoryl-MurNAc-pentapeptide, known as lipid I. This Rickettsia massiliae (strain Mtu5) protein is Phospho-N-acetylmuramoyl-pentapeptide-transferase.